Reading from the N-terminus, the 319-residue chain is L-lactate dehydrogenase 2 (319 aa).

Residues V17, D38, K43, Y69, and 83-84 (GA) contribute to the NAD(+) site. Positions 86 and 92 each coordinate substrate. Residues S105, 122-124 (ATN), and S147 contribute to the NAD(+) site. 124–127 (NPVD) provides a ligand contact to substrate. Residue 152-155 (DSGR) coordinates substrate. Beta-D-fructose 1,6-bisphosphate-binding residues include R157 and H172. The active-site Proton acceptor is H179. Residue Y224 is modified to Phosphotyrosine. A substrate-binding site is contributed by T233.

The protein belongs to the LDH/MDH superfamily. LDH family. As to quaternary structure, homotetramer.

It localises to the cytoplasm. The enzyme catalyses (S)-lactate + NAD(+) = pyruvate + NADH + H(+). The protein operates within fermentation; pyruvate fermentation to lactate; (S)-lactate from pyruvate: step 1/1. Its activity is regulated as follows. Allosterically activated by fructose 1,6-bisphosphate (FBP). In terms of biological role, catalyzes the conversion of lactate to pyruvate. This Peribacillus psychrosaccharolyticus (Bacillus psychrosaccharolyticus) protein is L-lactate dehydrogenase 2.